Reading from the N-terminus, the 359-residue chain is Nicotinate-nucleotide--dimethylbenzimidazole phosphoribosyltransferase (359 aa).

The Proton acceptor role is filled by E318.

It belongs to the CobT family. Homodimer.

It catalyses the reaction 5,6-dimethylbenzimidazole + nicotinate beta-D-ribonucleotide = alpha-ribazole 5'-phosphate + nicotinate + H(+). It participates in nucleoside biosynthesis; alpha-ribazole biosynthesis; alpha-ribazole from 5,6-dimethylbenzimidazole: step 1/2. Catalyzes the synthesis of alpha-ribazole-5'-phosphate from nicotinate mononucleotide (NAMN) and 5,6-dimethylbenzimidazole (DMB). The protein is Nicotinate-nucleotide--dimethylbenzimidazole phosphoribosyltransferase of Escherichia coli O8 (strain IAI1).